Reading from the N-terminus, the 274-residue chain is Formamidopyrimidine-DNA glycosylase (274 aa).

Pro2 acts as the Schiff-base intermediate with DNA in catalysis. The Proton donor role is filled by Glu3. Lys59 acts as the Proton donor; for beta-elimination activity in catalysis. Residues His93, Arg112, and Lys153 each contribute to the DNA site. The segment at 238-272 (QVHTKFNKPCPNCGELIQKIKLGGRGTYFCKKCQQ) adopts an FPG-type zinc-finger fold. Arg262 serves as the catalytic Proton donor; for delta-elimination activity.

It belongs to the FPG family. Monomer. Requires Zn(2+) as cofactor.

It carries out the reaction Hydrolysis of DNA containing ring-opened 7-methylguanine residues, releasing 2,6-diamino-4-hydroxy-5-(N-methyl)formamidopyrimidine.. The catalysed reaction is 2'-deoxyribonucleotide-(2'-deoxyribose 5'-phosphate)-2'-deoxyribonucleotide-DNA = a 3'-end 2'-deoxyribonucleotide-(2,3-dehydro-2,3-deoxyribose 5'-phosphate)-DNA + a 5'-end 5'-phospho-2'-deoxyribonucleoside-DNA + H(+). Involved in base excision repair of DNA damaged by oxidation or by mutagenic agents. Acts as a DNA glycosylase that recognizes and removes damaged bases. Has a preference for oxidized purines, such as 7,8-dihydro-8-oxoguanine (8-oxoG). Has AP (apurinic/apyrimidinic) lyase activity and introduces nicks in the DNA strand. Cleaves the DNA backbone by beta-delta elimination to generate a single-strand break at the site of the removed base with both 3'- and 5'-phosphates. This is Formamidopyrimidine-DNA glycosylase from Mycoplasma mobile (strain ATCC 43663 / 163K / NCTC 11711) (Mesomycoplasma mobile).